The primary structure comprises 522 residues: Glutathione reductase, mitochondrial (522 aa).

A mitochondrion-targeting transit peptide spans 1 to 43 (MALLPRALSSGGRPSWRRAARASRGFPLPLPFPAAATHALSRA). 2 residues coordinate FAD: Ser74 and Gly75. Ser74 is a glutathione binding site. Arg81 lines the glutathione pocket. FAD is bound at residue Glu94. Lys97 carries the post-translational modification N6-acetyllysine. Positions 101, 102, and 110 each coordinate FAD. Cys102 and Cys107 are disulfide-bonded. Tyr158 is a binding site for glutathione. Position 174 (Ala174) interacts with FAD. NADP(+)-binding residues include Ala239, Ile242, Glu245, Arg262, Arg268, and Gly334. Asp375 contributes to the FAD binding site. Position 381 (Leu381) interacts with NADP(+). Thr383 is a binding site for FAD. Position 391 (Arg391) interacts with glutathione. Residue Val414 coordinates NADP(+). His511 is a binding site for FAD. His511 serves as the catalytic Proton acceptor.

The protein belongs to the class-I pyridine nucleotide-disulfide oxidoreductase family. Homodimer; disulfide-linked. FAD serves as cofactor.

Its subcellular location is the mitochondrion. The protein localises to the cytoplasm. It carries out the reaction 2 glutathione + NADP(+) = glutathione disulfide + NADPH + H(+). Catalyzes the reduction of glutathione disulfide (GSSG) to reduced glutathione (GSH). Constitutes the major mechanism to maintain a high GSH:GSSG ratio in the cytosol. The protein is Glutathione reductase, mitochondrial (GSR) of Callithrix jacchus (White-tufted-ear marmoset).